A 1354-amino-acid chain; its full sequence is RNA-directed RNA polymerase VP1 (1354 aa).

It catalyses the reaction RNA(n) + a ribonucleoside 5'-triphosphate = RNA(n+1) + diphosphate. Functionally, RNA-directed RNA polymerase that is involved in transcription and genome replication. Following infection, it catalyzes the synthesis of fully conservative plus strands. After core assembly, which consists in recruitment of one capped plus-strand for each genomic segments and polymerase complexes, the polymerase switches mode and catalyzes the synthesis of complementary minus-strands. This Cryphonectria parasitica mycoreovirus 1 (strain 9B21) (CpMYRV-1) protein is RNA-directed RNA polymerase VP1.